The sequence spans 302 residues: Elongation factor Ts (302 aa).

The tract at residues T80–V83 is involved in Mg(2+) ion dislocation from EF-Tu.

This sequence belongs to the EF-Ts family.

The protein localises to the cytoplasm. Functionally, associates with the EF-Tu.GDP complex and induces the exchange of GDP to GTP. It remains bound to the aminoacyl-tRNA.EF-Tu.GTP complex up to the GTP hydrolysis stage on the ribosome. The protein is Elongation factor Ts of Methylibium petroleiphilum (strain ATCC BAA-1232 / LMG 22953 / PM1).